We begin with the raw amino-acid sequence, 135 residues long: MIKLRLKRFGKKREASFRLVACNSTSRRDGRPLQELGFYNPRTKETRLDTEAIRERLGQGAQPTDVVRTLLERGGLLEKTVRPAETVGKAKQAAKREADAKQAAKEAAEAKAAAADEKAAEAEASDSAESESTEG.

Residues 82–135 (RPAETVGKAKQAAKREADAKQAAKEAAEAKAAAADEKAAEAEASDSAESESTEG) are disordered. A compositionally biased stretch (basic and acidic residues) spans 94 to 121 (AKREADAKQAAKEAAEAKAAAADEKAAE). Residues 123-135 (EASDSAESESTEG) are compositionally biased toward acidic residues.

It belongs to the bacterial ribosomal protein bS16 family.

The sequence is that of Small ribosomal subunit protein bS16 from Synechococcus sp. (strain CC9605).